The primary structure comprises 80 residues: U-scoloptoxin(15)-Er1a (80 aa).

Positions Met-1–Ser-22 are cleaved as a signal peptide.

The protein belongs to the scoloptoxin-15 family. Contains 2 disulfide bonds. As to expression, expressed by the venom gland.

It is found in the secreted. This chain is U-scoloptoxin(15)-Er1a, found in Ethmostigmus rubripes (Giant centipede).